A 450-amino-acid polypeptide reads, in one-letter code: Phosphoglucosamine mutase (450 aa).

The active-site Phosphoserine intermediate is Ser-97. The Mg(2+) site is built by Ser-97, Asp-236, Asp-238, and Asp-240. Ser-97 is subject to Phosphoserine.

The protein belongs to the phosphohexose mutase family. Requires Mg(2+) as cofactor. In terms of processing, activated by phosphorylation.

The catalysed reaction is alpha-D-glucosamine 1-phosphate = D-glucosamine 6-phosphate. In terms of biological role, catalyzes the conversion of glucosamine-6-phosphate to glucosamine-1-phosphate. This Prochlorococcus marinus (strain AS9601) protein is Phosphoglucosamine mutase.